Consider the following 558-residue polypeptide: MPTDIEIARAATLQPISAIAETLGIPDEALHPYGRHIAKIDHAHIASLEAKPEGKLVLVTAISPTPAGEGKTTTTVGLGDALNRIGKRTVICLREPSLGPCFGMKGGAAGGGRSQVVPMEAINLHFTGDFHAITSAHSLAAALIDNHIYWGNALGIDPRRVAWRRVVDMNDRSLRSIVQSLGGVANGYPREDGFDITVASEVMAVFCLARDLADLEARLGRIVVAESRERKPVTLADLKATGAMTVLLKDALQPNLVQTLEGSPALIHGGPFANIAHGCNSVIATRSGLRLGEYAVTEAGFGADLGAEKFIDIKCRQTGLSPSAVVIVATVRALKMHGGVEKKALGGENVAALEKGFANLQRHVENVRRFGLPVVVAVNHFHADTEAEHAALKALCRDRLDVQAITCRHWAEGGAGAEDLARAVVSLAEGGAPATPNFVYPEEAKLTDKIRTIAQTLYGAADIQVESKAAAKLAQFEKDGYGRLPVCMAKTQYSFSTDPGLIGAPSGHVVAVRDVRLSAGAGFVVVICGEIMTMPGLPKVPASEGIYLDANGQIEGLF.

Residue 65–72 (TPAGEGKT) coordinates ATP.

This sequence belongs to the formate--tetrahydrofolate ligase family.

It carries out the reaction (6S)-5,6,7,8-tetrahydrofolate + formate + ATP = (6R)-10-formyltetrahydrofolate + ADP + phosphate. The protein operates within one-carbon metabolism; tetrahydrofolate interconversion. This Methylobacterium sp. (strain 4-46) protein is Formate--tetrahydrofolate ligase.